Here is a 493-residue protein sequence, read N- to C-terminus: MTLSNQLSDLRLFRQYAYIDGKWTHGDAGREEAVFDPATGEAIGHIPVLEVEQIRGAVDAAEAAFVQWRALRADERCERLLAWYDLLQANREDLATIMTLEQGKPLPDARGEVEYGASFVRWFAEEGKRTFGDTIPSHIPNAALGTIKEPVGIAALITPWNFPLAMITRKAAAAMAAGCPVIVKPAHETPYSALALAELAERAGIPAGVFNVVLGEAAEVSKLLCDDERIKALSFTGSTRVGRLLLEQSANTVKRVSLELGGNAPFIVGPDMDPREAAFAAVAAKFQTAGQDCLAANRILVHESIHDAFVEQFAERMAALTVGNGLESEVDLGPLIHGQAVEKASAIVDDALSRGATLVAGDQREAPGPNFFMPTLLTGVTPEMQVWREENFAPVAGITSYRDDDEVIEMANDTEYGLAAYVYTHDIRRIWKLLRALEYGMVSVNSVKMTGPPVPFGGVKQSGLGREGGVTGIDEYLETKYYCLGALGSVSGS.

Residues 160 to 161, 184 to 187, and 237 to 238 contribute to the NADP(+) site; these read WN, KPAH, and GS. Glu-259 (proton acceptor) is an active-site residue. Residue Leu-260 participates in NADP(+) binding. Cys-293 (nucleophile) is an active-site residue. Glu-390 is an NADP(+) binding site.

It belongs to the aldehyde dehydrogenase family.

It is found in the cytoplasm. The enzyme catalyses L-aspartate 4-semialdehyde + NAD(+) + H2O = L-aspartate + NADH + 2 H(+). Functionally, involved in the degradation of ectoine, which allows H.elongata to utilize ectoine as both a carbon and a nitrogen source for growth. Probably catalyzes the NAD(+)-dependent oxidation of L-aspartate-semialdehyde to L-aspartate. The protein is Aspartate-semialdehyde dehydrogenase (Non-phosphorylating) of Halomonas elongata (strain ATCC 33173 / DSM 2581 / NBRC 15536 / NCIMB 2198 / 1H9).